Here is a 346-residue protein sequence, read N- to C-terminus: NADH-cytochrome b5 reductase 2 (346 aa).

The chain crosses the membrane as a helical span at residues 28 to 50; the sequence is GGSNAALYAGLAAAAGAGAYYFL. The FAD-binding FR-type domain maps to 95 to 200; sequence QGFISLKLDS…KGPIPKYPWS (106 aa). Residue 203 to 238 participates in FAD binding; that stretch reads KHDHIALIAGGTGITPMYQLARAIFNNPADKTKVTL.

Belongs to the flavoprotein pyridine nucleotide cytochrome reductase family. The cofactor is FAD.

Its subcellular location is the mitochondrion outer membrane. It carries out the reaction 2 Fe(III)-[cytochrome b5] + NADH = 2 Fe(II)-[cytochrome b5] + NAD(+) + H(+). Functionally, may mediate the reduction of outer membrane cytochrome b5. This chain is NADH-cytochrome b5 reductase 2 (mcr1), found in Botryotinia fuckeliana (strain B05.10) (Noble rot fungus).